We begin with the raw amino-acid sequence, 157 residues long: DNA gyrase inhibitor (157 aa).

The protein belongs to the DNA gyrase inhibitor family. As to quaternary structure, interacts with DNA gyrase.

Its subcellular location is the cytoplasm. In terms of biological role, inhibits the supercoiling activity of DNA gyrase. Acts by inhibiting DNA gyrase at an early step, prior to (or at the step of) binding of DNA by the gyrase. It protects cells against toxins that target DNA gyrase, by inhibiting activity of these toxins and reducing the formation of lethal double-strand breaks in the cell. This Enterobacter lignolyticus (strain SCF1) protein is DNA gyrase inhibitor.